Consider the following 164-residue polypeptide: Transcription antitermination protein NusB (164 aa).

This sequence belongs to the NusB family.

Functionally, involved in transcription antitermination. Required for transcription of ribosomal RNA (rRNA) genes. Binds specifically to the boxA antiterminator sequence of the ribosomal RNA (rrn) operons. This Chlorobium limicola (strain DSM 245 / NBRC 103803 / 6330) protein is Transcription antitermination protein NusB.